A 467-amino-acid chain; its full sequence is Ribosomal protein uS12 methylthiotransferase RimO (467 aa).

The MTTase N-terminal domain maps to 1 to 110 (MDLHGCAKNQ…LPQLIDSMFP (110 aa)). [4Fe-4S] cluster is bound by residues C6, C42, C73, C153, C157, and C160. Residues 139–386 (LNFPRSTYIK…QNAQTSITEK (248 aa)) enclose the Radical SAM core domain. In terms of domain architecture, TRAM spans 389–467 (DSFIGKEIEV…NGFDLEAVAV (79 aa)).

It belongs to the methylthiotransferase family. RimO subfamily. Requires [4Fe-4S] cluster as cofactor.

It is found in the cytoplasm. The catalysed reaction is L-aspartate(89)-[ribosomal protein uS12]-hydrogen + (sulfur carrier)-SH + AH2 + 2 S-adenosyl-L-methionine = 3-methylsulfanyl-L-aspartate(89)-[ribosomal protein uS12]-hydrogen + (sulfur carrier)-H + 5'-deoxyadenosine + L-methionine + A + S-adenosyl-L-homocysteine + 2 H(+). Catalyzes the methylthiolation of an aspartic acid residue of ribosomal protein uS12. This is Ribosomal protein uS12 methylthiotransferase RimO from Treponema denticola (strain ATCC 35405 / DSM 14222 / CIP 103919 / JCM 8153 / KCTC 15104).